The sequence spans 439 residues: Xylose isomerase (439 aa).

Residues His-101 and Asp-104 contribute to the active site. Positions 232, 268, 271, 296, 307, 309, and 339 each coordinate Mg(2+).

Belongs to the xylose isomerase family. In terms of assembly, homotetramer. The cofactor is Mg(2+).

It is found in the cytoplasm. The enzyme catalyses alpha-D-xylose = alpha-D-xylulofuranose. The protein is Xylose isomerase of Haemophilus influenzae (strain 86-028NP).